Consider the following 1456-residue polypeptide: MATHAEEIVLVNTNILNVNMSNVTKLTSTNYLMWSRQVHALFDGYELAGFLDGSTPMPPATIGTDAVPRVNPDYTRWRRQDKLIYSAILGAISMSVQPAVSRATTAAQIWETLRKIYANPSYGHVTQLRFITRFDQLALLGKPMDHDEQVERVLENLPDDYKPVIDQIAAKDTPPSLTEIHERLINRESKLLALNSAEVVPITANVVTHRNTNTNRNQNNRGDNRNYNNNNNRSNSWQPSSSGSRSDNRQPKPYLGRCQICSVQGHSAKRCPQLHQFQSTTNQQQSTSPFTPWQPRANLAVNSPYNANNWLLDSGATHHITSDFNNLSFHQPYTGGDDVMIADGSTIPITHTGSASLPTSSRSLDLNKVLYVPNIHKNLISVYRLCNTNRVSVEFFPASFQVKDLNTGVPLLQGKTKDELYEWPIASSQAVSMFASPCSKATHSSWHSRLGHPSLAILNSVISNHSLPVLNPSHKLLSCSDCFINKSHKVPFSNSTITSSKPLEYIYSDVWSSPILSIDNYRYYVIFVDHFTRYTWLYPLKQKSQVKDTFIIFKSLVENRFQTRIGTLYSDNGGEFVVLRDYLSQHGISHFTSPPHTPEHNGLSERKHRHIVEMGLTLLSHASVPKTYWPYAFSVAVYLINRLPTPLLQLQSPFQKLFGQPPNYEKLKVFGCACYPWLRPYNRHKLEDKSKQCAFMGYSLTQSAYLCLHIPTGRLYTSRHVQFDERCFPFSTTNFGVSTSQEQRSDSAPNWPSHTTLPTTPLVLPAPPCLGPHLDTSPRPPSSPSPLCTTQVSSSNLPSSSISSPSSSEPTAPSHNGPQPTAQPHQTQNSNSNSPILNNPNPNSPSPNSPNQNSPLPQSPISSPHIPTPSTSISEPNSPSSSSTSTPPLPPVLPAPPIIQVNAQAPVNTHSMATRAKDGIRKPNQKYSYATSLAANSEPRTAIQAMKDDRWRQAMGSEINAQIGNHTWDLVPPPPPSVTIVGCRWIFTKKFNSDGSLNRYKARLVAKGYNQRPGLDYAETFSPVIKSTSIRIVLGVAVDRSWPIRQLDVNNAFLQGTLTDEVYMSQPPGFVDKDRPDYVCRLRKAIYGLKQAPRAWYVELRTYLLTVGFVNSISDTSLFVLQRGRSIIYMLVYVDDILITGNDTVLLKHTLDALSQRFSVKEHEDLHYFLGIEAKRVPQGLHLSQRRYTLDLLARTNMLTAKPVATPMATSPKLTLHSGTKLPDPTEYRGIVGSLQYLAFTRPDLSYAVNRLSQYMHMPTDDHWNALKRVLRYLAGTPDHGIFLKKGNTLSLHAYSDADWAGDTDDYVSTNGYIVYLGHHPISWSSKKQKGVVRSSTEAEYRSVANTSSELQWICSLLTELGIQLSHPPVIYCDNVGATYLCANPVFHSRMKHIALDYHFIRNQVQSGALRVVHVSTHDQLADTLTKPLSRVAFQNFSRKIGVIKVPPSCGGVLRI.

The tract at residues 205–252 (NVVTHRNTNTNRNQNNRGDNRNYNNNNNRSNSWQPSSSGSRSDNRQPK) is disordered. The segment covering 210–245 (RNTNTNRNQNNRGDNRNYNNNNNRSNSWQPSSSGSR) has biased composition (low complexity). The segment at 257–273 (RCQICSVQGHSAKRCPQ) adopts a CCHC-type zinc-finger fold. Over residues 276–291 (QFQSTTNQQQSTSPFT) the composition is skewed to low complexity. The interval 276 to 295 (QFQSTTNQQQSTSPFTPWQP) is disordered. The active-site For protease activity is Asp313. The region spanning 498-661 (TSSKPLEYIY…SPFQKLFGQP (164 aa)) is the Integrase catalytic domain. The Mg(2+) site is built by Asp509 and Asp571. Positions 738 to 754 (STSQEQRSDSAPNWPSH) are enriched in polar residues. Positions 738–896 (STSQEQRSDS…PPLPPVLPAP (159 aa)) are disordered. Residues 793–814 (SSSNLPSSSISSPSSSEPTAPS) are compositionally biased toward low complexity. Positions 816–827 (NGPQPTAQPHQT) are enriched in polar residues. Composition is skewed to low complexity over residues 828–841 (QNSN…NNPN) and 849–886 (SPNQ…STST). Over residues 887-896 (PPLPPVLPAP) the composition is skewed to pro residues. The Reverse transcriptase Ty1/copia-type domain maps to 965 to 1208 (NHTWDLVPPP…LTAKPVATPM (244 aa)).

It catalyses the reaction DNA(n) + a 2'-deoxyribonucleoside 5'-triphosphate = DNA(n+1) + diphosphate. This Arabidopsis thaliana (Mouse-ear cress) protein is Retrovirus-related Pol polyprotein from transposon RE2 (RE2).